Here is a 174-residue protein sequence, read N- to C-terminus: Large ribosomal subunit protein bL12cz (174 aa).

A chloroplast-targeting transit peptide spans 1-45 (MASTTFSSAFSILSLPSSSPSPPPSPPRTLPVANRRRRAAAVAST). Positions 1–46 (MASTTFSSAFSILSLPSSSPSPPPSPPRTLPVANRRRRAAAVASTA) are disordered. The span at 7 to 18 (SSAFSILSLPSS) shows a compositional bias: low complexity. Residues 19 to 29 (SPSPPPSPPRT) show a composition bias toward pro residues.

This sequence belongs to the bacterial ribosomal protein bL12 family.

The protein localises to the plastid. Its subcellular location is the chloroplast. This Secale cereale (Rye) protein is Large ribosomal subunit protein bL12cz (RPL12-1).